The primary structure comprises 304 residues: Negative regulator of the PHO system (304 aa).

The Protein kinase domain occupies 7 to 297 (FKQLEKVGNG…AKDALNHPWF (291 aa)). ATP-binding positions include 13–21 (VGNGTYATV) and Lys36. Residue Asp133 is the Proton acceptor of the active site.

This sequence belongs to the protein kinase superfamily. CMGC Ser/Thr protein kinase family. CDC2/CDKX subfamily. Interacts with a number of cyclins.

The catalysed reaction is L-seryl-[protein] + ATP = O-phospho-L-seryl-[protein] + ADP + H(+). It carries out the reaction L-threonyl-[protein] + ATP = O-phospho-L-threonyl-[protein] + ADP + H(+). Functionally, when phosphate concentrations are high it phosphorylates the PHO4 transcription factor thus establishing repression. The chain is Negative regulator of the PHO system (PHO85) from Kluyveromyces lactis (strain ATCC 8585 / CBS 2359 / DSM 70799 / NBRC 1267 / NRRL Y-1140 / WM37) (Yeast).